Reading from the N-terminus, the 498-residue chain is Lysine--tRNA ligase (498 aa).

Residues Glu407 and Glu414 each coordinate Mg(2+).

Belongs to the class-II aminoacyl-tRNA synthetase family. In terms of assembly, homodimer. Mg(2+) serves as cofactor.

It is found in the cytoplasm. It catalyses the reaction tRNA(Lys) + L-lysine + ATP = L-lysyl-tRNA(Lys) + AMP + diphosphate. The protein is Lysine--tRNA ligase of Rhizobium etli (strain CIAT 652).